The primary structure comprises 369 residues: Tyrosyl-DNA phosphodiesterase 2 (369 aa).

The interval 58–77 (EKTEVTGNKRKDDTAEASGT) is disordered. A compositionally biased stretch (basic and acidic residues) spans 59–71 (KTEVTGNKRKDDT). An interaction with 5' end of substrate DNA region spans residues 129–133 (NVDGL). Mg(2+) contacts are provided by D131 and E161. Residues 235-240 (HLESCK) form an interaction with 5' end of substrate DNA region. The active-site Proton donor/acceptor is D271. An interaction with 5' end of substrate DNA region spans residues 273–275 (NLR).

This sequence belongs to the CCR4/nocturin family. TTRAP/TDP2 subfamily. It depends on Mg(2+) as a cofactor. Mn(2+) is required as a cofactor. As to expression, expressed ubiquitously during blastula stages and throughout gastrulation. Shortly after shield formation, expressed weakly in dorsal forerunner cells (DFCs). Between somite stages 5 and 9, expressed in the tailbud and around the Kupffer's vesicle at a higher level than the more uniform expression in the embryo.

The protein localises to the nucleus. It is found in the PML body. Functionally, DNA repair enzyme that can remove a variety of covalent adducts from DNA through hydrolysis of a 5'-phosphodiester bond, giving rise to DNA with a free 5' phosphate. Catalyzes the hydrolysis of dead-end complexes between DNA and the topoisomerase 2 (top2) active site tyrosine residue. Hydrolyzes 5'-phosphoglycolates on protruding 5' ends on DNA double-strand breaks (DSBs) due to DNA damage by radiation and free radicals. Controls gastrulation movements and left/right (L/R) axis determination via smad3-mediated regulation of cdh1/e-cadherin. Regulates the formation of Kupffer's vesicle, a signaling center essential for establishing L/R asymmetry. Modulates smad3 activity through modulating nodal-acvr1/akt4 signaling. This chain is Tyrosyl-DNA phosphodiesterase 2 (tdp2), found in Danio rerio (Zebrafish).